The primary structure comprises 1106 residues: Solute carrier family 12 member 7 (1106 aa).

The Cytoplasmic portion of the chain corresponds to 1–143; it reads MVYTALTWQR…PRESKAPCMG (143 aa). Residues 17–83 form a disordered region; sequence GLVPSHLPQE…SPFIGSAAAD (67 aa). Phosphoserine occurs at positions 74 and 86. A discontinuously helical membrane pass occupies residues 144–166; that stretch reads TFIGVYLPCLQNILGVILFLRLT. K(+)-binding residues include Asn-155 and Ile-156. Val-159 is a chloride binding site. Over 167–173 the chain is Extracellular; the sequence is WIVGAAG. Residues 174 to 196 traverse the membrane as a helical segment; sequence VLESFLVVSMCCTCTMLTAVSMS. Residues 197 to 220 lie on the Cytoplasmic side of the membrane; it reads AIATNGVVPAGGSYYMISRSLGPE. The chain crosses the membrane as a helical span at residues 221-249; sequence FGGAVGLCFYLGTTFAGAMYILGTIEIFL. Residues 250–273 are Extracellular-facing; it reads TYISPGAAVFQAETPEGEAAALLH. 2 consecutive transmembrane segments (helical) span residues 274–295 and 296–324; these read NMRV…VGVK and YVNK…KTAF. Residues 325–443 lie on the Extracellular side of the membrane; sequence DPPDIPVCLL…PYVLSDITTY (119 aa). Residues Asn-336, Asn-355, and Asn-384 are each glycosylated (N-linked (GlcNAc...) asparagine). The helical transmembrane segment at 444-464 threads the bilayer; that stretch reads FTVLVGIYFPSVTGIMAGSNR. Residues Pro-453 and Thr-456 each contribute to the K(+) site. Pro-453 is a chloride binding site. Residues Gly-457 and Ile-458 each coordinate chloride. Over 465–474 the chain is Cytoplasmic; that stretch reads SGDLKDAQKS. A helical transmembrane segment spans residues 475–497; the sequence is IPTGTILAIVTTSFIYLSCIVLF. Residues 498-528 lie on the Extracellular side of the membrane; it reads GACIEGVVLRDKFGEALQGNLVIGMLAWPSP. The chain crosses the membrane as a helical span at residues 529–555; the sequence is WVIVIGSFFSTCGAGLQSLTGAPRLLQ. Topologically, residues 556 to 578 are cytoplasmic; that stretch reads AIARDGIVPFLQVFGHGKANGEP. 2 consecutive transmembrane segments (helical) span residues 579–597 and 598–622; these read TWAL…LIAS and LDSV…ACAV. A chloride-binding site is contributed by Tyr-613. At 623 to 636 the chain is on the cytoplasmic side; that stretch reads QTLLRTPNWRPRFK. The next 2 helical transmembrane spans lie at 637–659 and 660–675; these read YYHW…ICSW and YYAL…IYKY. Over 676–1106 the chain is Cytoplasmic; that stretch reads IEYRGAEKEW…GGREVITIYS (431 aa). Residues 688 to 704 are scissor helix; that stretch reads GIRGLSLNAARYALLRV. Residues 980 to 999 form a disordered region; that stretch reads RNTASHTAASRAQAPPTPDK. Phosphothreonine is present on residues Thr-996 and Thr-1003.

The protein belongs to the SLC12A transporter family. K/Cl co-transporter subfamily. In terms of assembly, homodimer; adopts a domain-swap conformation at the scissor helices connecting the transmembrane domain and C-terminal domain. Heterodimer with K-Cl cotransporter SLC12A5. As to expression, widely expressed. Higher levels in heart, kidney and lung (at protein level).

Its subcellular location is the cell membrane. It catalyses the reaction K(+)(in) + chloride(in) = K(+)(out) + chloride(out). Activated by N-ethylmaleimide (NEM). Inhibited by furosemide, DIDS and bumetanide. The inhibition is much stronger in the presence of 50 mM K(+) in the uptake medium. Inhibited by DIOA. Inhibited by WNK3. Mediates electroneutral potassium-chloride cotransport when activated by cell swelling. May mediate K(+) uptake into Deiters' cells in the cochlea and contribute to K(+) recycling in the inner ear. Important for the survival of cochlear outer and inner hair cells and the maintenance of the organ of Corti. May be required for basolateral Cl(-) extrusion in the kidney and contribute to renal acidification. This chain is Solute carrier family 12 member 7, found in Oryctolagus cuniculus (Rabbit).